Here is an 859-residue protein sequence, read N- to C-terminus: Bifunctional levopimaradiene synthase, chloroplastic (859 aa).

The transit peptide at 1–52 (MALLSSSLSSHIPTGAHHLTLNAYANTQCIPHFFSTLNAGTSAGKRSSLYLR) directs the protein to the chloroplast. Positions 392, 394, 611, 615, 755, and 763 each coordinate Mg(2+). The short motif at 392-395 (DIDD) is the DXDD motif element. The short motif at 611–615 (DDLYD) is the DDXXD motif element.

Belongs to the terpene synthase family. Tpsd subfamily. Mg(2+) is required as a cofactor. The cofactor is Mn(2+).

The protein resides in the plastid. Its subcellular location is the chloroplast. It carries out the reaction (+)-copalyl diphosphate = abieta-8(14),12-diene + diphosphate. The catalysed reaction is (+)-copalyl diphosphate = abieta-7,13-diene + diphosphate. It participates in secondary metabolite biosynthesis; terpenoid biosynthesis. Its pathway is terpene metabolism; oleoresin biosynthesis. Its function is as follows. Terpene synthase (di-TPS) involved in the biosynthesis of diterpene natural products included in conifer oleoresin secretions and volatile emissions; these compounds contribute to biotic and abiotic stress defense against herbivores and pathogens. Catalyzes the conversion of (+)-copalyl diphosphate ((+)-CPP) to isopimaradiene. This chain is Bifunctional levopimaradiene synthase, chloroplastic, found in Picea sitchensis (Sitka spruce).